A 233-amino-acid chain; its full sequence is 2,3-bisphosphoglycerate-dependent phosphoglycerate mutase (233 aa).

Residues Arg8–Asn15, Thr21–Gly22, Arg60, Glu116–Tyr119, Lys127, Arg143–Arg144, and Gly187–Asn188 each bind substrate. Catalysis depends on His9, which acts as the Tele-phosphohistidine intermediate. The active-site Proton donor/acceptor is Glu116.

The protein belongs to the phosphoglycerate mutase family. BPG-dependent PGAM subfamily.

It carries out the reaction (2R)-2-phosphoglycerate = (2R)-3-phosphoglycerate. The protein operates within carbohydrate degradation; glycolysis; pyruvate from D-glyceraldehyde 3-phosphate: step 3/5. Catalyzes the interconversion of 2-phosphoglycerate and 3-phosphoglycerate. The protein is 2,3-bisphosphoglycerate-dependent phosphoglycerate mutase of Gloeothece citriformis (strain PCC 7424) (Cyanothece sp. (strain PCC 7424)).